The chain runs to 727 residues: Polyribonucleotide nucleotidyltransferase (727 aa).

Residues Asp-488 and Asp-494 each coordinate Mg(2+). One can recognise a KH domain in the interval Pro-555–Ile-614. The 69-residue stretch at Gly-624 to Lys-692 folds into the S1 motif domain. Residues Met-691–Gln-727 are disordered. A compositionally biased stretch (basic and acidic residues) spans Pro-707–Gly-720.

The protein belongs to the polyribonucleotide nucleotidyltransferase family. Requires Mg(2+) as cofactor.

The protein localises to the cytoplasm. It catalyses the reaction RNA(n+1) + phosphate = RNA(n) + a ribonucleoside 5'-diphosphate. Involved in mRNA degradation. Catalyzes the phosphorolysis of single-stranded polyribonucleotides processively in the 3'- to 5'-direction. The sequence is that of Polyribonucleotide nucleotidyltransferase from Acidovorax sp. (strain JS42).